A 286-amino-acid polypeptide reads, in one-letter code: 4-hydroxybenzoate octaprenyltransferase (286 aa).

7 helical membrane passes run 21 to 40 (GTLLLLWPCLMALMLAAGGM), 95 to 115 (ILFVILGLSAFGLVLLLNGLV), 142 to 162 (FLGIVWSWSIPMAYAAQTGEV), 167 to 187 (WWLFAANWCWTVAYDTMYAMV), 210 to 230 (QIIGLFQLAALACFIAAGWSA), 235 to 255 (LYGLGILTFVGFSTYQQMLIF), and 266 to 286 (FLNNNWAGLALFVGLGADYLI).

The protein belongs to the UbiA prenyltransferase family. The cofactor is Mg(2+).

Its subcellular location is the cell inner membrane. The enzyme catalyses all-trans-octaprenyl diphosphate + 4-hydroxybenzoate = 4-hydroxy-3-(all-trans-octaprenyl)benzoate + diphosphate. The protein operates within cofactor biosynthesis; ubiquinone biosynthesis. Its function is as follows. Catalyzes the prenylation of para-hydroxybenzoate (PHB) with an all-trans polyprenyl group. Mediates the second step in the final reaction sequence of ubiquinone-8 (UQ-8) biosynthesis, which is the condensation of the polyisoprenoid side chain with PHB, generating the first membrane-bound Q intermediate 3-octaprenyl-4-hydroxybenzoate. The polypeptide is 4-hydroxybenzoate octaprenyltransferase (Shewanella baltica (strain OS155 / ATCC BAA-1091)).